The chain runs to 1530 residues: Glutamate-rich protein 3 (1530 aa).

Disordered stretches follow at residues 165–187, 408–429, 475–661, 673–724, 773–870, 923–1146, 1167–1334, 1360–1383, and 1425–1530; these read RLQP…RSRS, SLPK…KAEG, MTSK…PMPI, TEKG…GLEE, EAME…AVGL, REAA…LLGE, LENI…GMGG, LAGS…DVAE, and YTTE…NVQV. Basic and acidic residues-rich tracts occupy residues 415 to 429, 531 to 545, and 552 to 562; these read EKST…KAEG, LDDK…KESE, and PDARDNVKDEN. The span at 563–574 shows a compositional bias: acidic residues; the sequence is DGCSESELEEDK. Residues 581-592 are compositionally biased toward low complexity; it reads SSTSSRSHPYSS. The segment covering 600–616 has biased composition (basic and acidic residues); that stretch reads VGDREAHTDSSTDESAR. Positions 638 to 647 are enriched in acidic residues; that stretch reads ESLEIEIEDQ. Composition is skewed to basic and acidic residues over residues 684–717 and 773–787; these read LSEK…DKKA and EAME…RDAD. A compositionally biased stretch (low complexity) spans 834-845; the sequence is GIERGAEGAAEA. The span at 943–958 shows a compositional bias: acidic residues; sequence GESEEEASIDLEDTGP. 3 stretches are compositionally biased toward basic and acidic residues: residues 979-992, 1039-1116, and 1173-1212; these read EPAK…RTET, EANR…EETK, and LRKE…RQDG. Over residues 1213–1225 the composition is skewed to low complexity; that stretch reads EGALAAPEAEPAG. A compositionally biased stretch (acidic residues) spans 1289–1300; it reads AVDEDPEEEEDK. Composition is skewed to basic and acidic residues over residues 1464 to 1487 and 1502 to 1511; these read GRQE…RELS and DFTETREKQQ. Polar residues predominate over residues 1517–1530; sequence ESETADVSPNNVQV.

In terms of assembly, interacts with CLTC/clathrin heavy chain 1, AP2A2/AP-2 complex subunit alpha-2, and PIK3C2A/phosphatidylinositol 4-phosphate 3-kinase C2 domain-containing subunit alpha. As to expression, expressed in dopaminergic and serotoninergic neurons.

Its subcellular location is the cell projection. It is found in the cilium. The protein localises to the cytoplasm. Its function is as follows. Component of the primary cilium that controls cilium formation and length. May function within retrograde intraflagellar transport (IFT)-associated pathways to remove signaling proteins from primary cilia. Also involved in neuronal vesicle biogenesis and neurotransmitter vesicular function. This Homo sapiens (Human) protein is Glutamate-rich protein 3.